Consider the following 67-residue polypeptide: Phycobilisome 7.8 kDa linker polypeptide, allophycocyanin-associated, core (67 aa).

Residues 1–56 (MRMFRITACVPSQTRIRTQRELQNTYFTKLVPYDNWFREQQRIMKMGGKIVKVELA) enclose the CpcD-like domain.

Belongs to the phycobilisome linker protein family.

The protein resides in the cellular thylakoid membrane. Rod linker protein, associated with allophycocyanin. Linker polypeptides determine the state of aggregation and the location of the disk-shaped phycobiliprotein units within the phycobilisome and modulate their spectroscopic properties in order to mediate a directed and optimal energy transfer. This Synechocystis sp. (strain PCC 6714) (Aphanocapsa sp. (strain PCC 6714)) protein is Phycobilisome 7.8 kDa linker polypeptide, allophycocyanin-associated, core (apcC).